The primary structure comprises 2119 residues: Outer kinetochore KNL1 complex subunit KNL1 (2119 aa).

The interval 1 to 59 is disordered; sequence MDGVYSEANEENDNTQRPVRRQHSSILKPPRSPLQDLKCGNQTNQEPNPPRKRKSSRRV. Residues 1–202 form a may mediate oligomerization region; sequence MDGVYSEANE…SDNFIKRLKT (202 aa). Interaction with microtubules stretches follow at residues 17–34 and 53–80; these read RPVR…RSPL and RKSS…ERNS. Residues 23-80 form an interaction with PP1CA; contains the protein phosphatase 1 (PP1) interaction motifs SILK, RVXF and phi-phi region; it reads HSSILKPPRSPLQDLKCGNQTNQEPNPPRKRKSSRRVSFADTIKVFQTESHMKTERNS. Phosphoserine is present on residues S24, S32, and S60. The segment at 124 to 140 is interaction with BUB1; the sequence is ENQMDLTASHTVMITKG. Residues 160–179 form an interaction with BUB1B region; that stretch reads ENLKHHAANSRIKKDLACST. S538 carries the post-translational modification Phosphoserine. Phosphothreonine is present on residues T540 and T739. Residues 723–827 form repeat 1; the sequence is DKTILFSEGN…MTKSHTVFID (105 aa). Residues 723 to 1027 form a 2 X 104 AA approximate repeats region; sequence DKTILFSEGN…VTRSHTVFID (305 aa). S794 and S878 each carry phosphoserine. Repeat unit 2 spans residues 923-1027; it reads KSITFPENDK…VTRSHTVFID (105 aa). A phosphoserine mark is found at S1243 and S1464. The disordered stretch occupies residues 1557-1583; it reads SQRESLPSENKTENCRAQKRTRVEEND. Basic and acidic residues predominate over residues 1566 to 1583; that stretch reads NKTENCRAQKRTRVEEND. The Nuclear localization signal signature appears at 1577–1590; sequence TRVEENDVTNEKKI. Phosphoserine occurs at positions 1616, 1627, and 1642. Residues 1763-1890 are required for interaction with ZWINT; sequence KVKDYSDEEL…FLEVETQKTQ (128 aa). A coiled-coil region spans residues 1799–1890; the sequence is VALYNKLVHS…FLEVETQKTQ (92 aa). The tract at residues 1873-2093 is interaction with NSL1, DSN1 and required for assembly into the outer kinetochore; sequence EEEELQRKFL…GKTGHDEIAA (221 aa).

As to quaternary structure, component of the KNL1 complex composed of KNL1 and ZWINT. Part of the ten-subunit outer kinetochore KMN network that includes the KNL1, MIS12 and NDC80 complexes; a bioriented kinetochore contains approximately 150 copies of the network. Interacts (via C-terminus) with the MIS12 complex subunits NSL1 (via C-terminus), PMF1 and DSN1; the interaction is direct. Interacts (via N-terminal region) with BUB1B (via BUB1 N-terminal domain); the interaction is direct and is required for cell cycle arrest upon activation of the mitotic spindle assembly checkpoint. Interacts (via N-terminal region) with BUB1 (via BUB1 N-terminal domain); the interaction is direct. Interacts with the protein phosphatase PP1 subunit PPP1CA; the interaction is direct and mutually exclusive with binding to microtubules. Interacts with the protein phosphatase PP1 subunit PPP1CC; the interaction is direct and mutually exclusive with binding to microtubules. Post-translationally, phosphorylation by AURKB negatively regulates its interaction with protein phosphatase 1 (PP1) subunit PPP1CA and with microtubules. Expressed in oocytes during meiotic progression (at protein level). Expressed during spermatogenesis.

Its subcellular location is the nucleus. The protein resides in the chromosome. It is found in the centromere. It localises to the kinetochore. The protein localises to the cytoplasm. In terms of biological role, acts as a component of the outer kinetochore KNL1 complex that serves as a docking point for spindle assembly checkpoint components and mediates microtubule-kinetochore interactions. Kinetochores, consisting of a centromere-associated inner segment and a microtubule-contacting outer segment, play a crucial role in chromosome segregation by mediating the physical connection between centromeric DNA and spindle microtubules. The outer kinetochore is made up of the ten-subunit KMN network, comprising the MIS12, NDC80 and KNL1 complexes, and auxiliary microtubule-associated components; together they connect the outer kinetochore with the inner kinetochore, bind microtubules, and mediate interactions with mitotic checkpoint proteins that delay anaphase until chromosomes are bioriented on the spindle. Required for kinetochore binding by a distinct subset of kMAPs (kinetochore-bound microtubule-associated proteins) and motors. Acts in coordination with CENPK to recruit the NDC80 complex to the outer kinetochore. Can bind either to microtubules or to the protein phosphatase 1 (PP1) catalytic subunits PPP1CA and PPP1CC (via overlapping binding sites), it has higher affinity for PP1. Recruits MAD2L1 to the kinetochore and also directly links BUB1 and BUB1B to the kinetochore. In addition to orienting mitotic chromosomes, it is also essential for alignment of homologous chromosomes during meiotic metaphase I. In meiosis I, required to activate the spindle assembly checkpoint at unattached kinetochores to correct erroneous kinetochore-microtubule attachments. The chain is Outer kinetochore KNL1 complex subunit KNL1 from Mus musculus (Mouse).